Here is a 222-residue protein sequence, read N- to C-terminus: Large ribosomal subunit protein uL4 (222 aa).

The interval threonine 50–alanine 72 is disordered.

It belongs to the universal ribosomal protein uL4 family. Part of the 50S ribosomal subunit.

One of the primary rRNA binding proteins, this protein initially binds near the 5'-end of the 23S rRNA. It is important during the early stages of 50S assembly. It makes multiple contacts with different domains of the 23S rRNA in the assembled 50S subunit and ribosome. In terms of biological role, forms part of the polypeptide exit tunnel. This Chlamydia muridarum (strain MoPn / Nigg) protein is Large ribosomal subunit protein uL4.